The sequence spans 185 residues: Large ribosomal subunit protein uL5 (185 aa).

This sequence belongs to the universal ribosomal protein uL5 family. Part of the 50S ribosomal subunit; part of the 5S rRNA/L5/L18/L25 subcomplex. Contacts the 5S rRNA and the P site tRNA. Forms a bridge to the 30S subunit in the 70S ribosome.

In terms of biological role, this is one of the proteins that bind and probably mediate the attachment of the 5S RNA into the large ribosomal subunit, where it forms part of the central protuberance. In the 70S ribosome it contacts protein S13 of the 30S subunit (bridge B1b), connecting the 2 subunits; this bridge is implicated in subunit movement. Contacts the P site tRNA; the 5S rRNA and some of its associated proteins might help stabilize positioning of ribosome-bound tRNAs. In Bartonella henselae (strain ATCC 49882 / DSM 28221 / CCUG 30454 / Houston 1) (Rochalimaea henselae), this protein is Large ribosomal subunit protein uL5.